A 344-amino-acid polypeptide reads, in one-letter code: S-adenosylmethionine:tRNA ribosyltransferase-isomerase (344 aa).

The protein belongs to the QueA family. In terms of assembly, monomer.

The protein resides in the cytoplasm. The catalysed reaction is 7-aminomethyl-7-carbaguanosine(34) in tRNA + S-adenosyl-L-methionine = epoxyqueuosine(34) in tRNA + adenine + L-methionine + 2 H(+). It participates in tRNA modification; tRNA-queuosine biosynthesis. Functionally, transfers and isomerizes the ribose moiety from AdoMet to the 7-aminomethyl group of 7-deazaguanine (preQ1-tRNA) to give epoxyqueuosine (oQ-tRNA). The chain is S-adenosylmethionine:tRNA ribosyltransferase-isomerase from Thiobacillus denitrificans (strain ATCC 25259 / T1).